Reading from the N-terminus, the 156-residue chain is MPRRREVAKRVILPDPKFNDRVVAKLVNVIMVGGKKSTAERALYGALEVVSQKTGEEAVKVLKKCLDNIKPTLEVKSRRVGGSTYQVPVEVRADRRVSLAMRWLVKYANDRSEKTVTDKLAGEILDVYNNRGAAVKKREDTHRMAEANRAFAHYRW.

It belongs to the universal ribosomal protein uS7 family. In terms of assembly, part of the 30S ribosomal subunit. Contacts proteins S9 and S11.

Its function is as follows. One of the primary rRNA binding proteins, it binds directly to 16S rRNA where it nucleates assembly of the head domain of the 30S subunit. Is located at the subunit interface close to the decoding center, probably blocks exit of the E-site tRNA. The polypeptide is Small ribosomal subunit protein uS7 (Geobacter metallireducens (strain ATCC 53774 / DSM 7210 / GS-15)).